Reading from the N-terminus, the 516-residue chain is Probable fucosyltransferase 8 (516 aa).

Residues 5–25 (ITVVTCLFLLSVMQLSFFNIF) form a helical; Signal-anchor for type II membrane protein membrane-spanning segment. At 26 to 516 (NYQLLDATTN…ITGLKLVDSN (491 aa)) the chain is on the lumenal side. Residues N35, N116, N211, N362, and N463 are each glycosylated (N-linked (GlcNAc...) asparagine).

It belongs to the glycosyltransferase 37 family. In terms of tissue distribution, expressed in leaves and stems.

It localises to the golgi apparatus. Its subcellular location is the golgi stack membrane. The protein operates within protein modification; protein glycosylation. Functionally, may be involved in cell wall biosynthesis. May act as a fucosyltransferase. This chain is Probable fucosyltransferase 8 (FUT8), found in Arabidopsis thaliana (Mouse-ear cress).